The sequence spans 163 residues: Large ribosomal subunit protein uL11 (163 aa).

The segment at 1–25 (MAGTIEVLVAGGQADPGPPLGPELG) is disordered.

This sequence belongs to the universal ribosomal protein uL11 family. In terms of assembly, part of the ribosomal stalk of the 50S ribosomal subunit. Interacts with L10 and the large rRNA to form the base of the stalk. L10 forms an elongated spine to which L12 dimers bind in a sequential fashion forming a multimeric L10(L12)X complex.

Forms part of the ribosomal stalk which helps the ribosome interact with GTP-bound translation factors. This chain is Large ribosomal subunit protein uL11, found in Natronomonas pharaonis (strain ATCC 35678 / DSM 2160 / CIP 103997 / JCM 8858 / NBRC 14720 / NCIMB 2260 / Gabara) (Halobacterium pharaonis).